The following is a 370-amino-acid chain: tRNA/tmRNA (uracil-C(5))-methyltransferase (370 aa).

S-adenosyl-L-methionine contacts are provided by Gln190, Tyr218, Asn223, Glu239, and Asp299. Catalysis depends on Cys324, which acts as the Nucleophile. Glu358 serves as the catalytic Proton acceptor.

The protein belongs to the class I-like SAM-binding methyltransferase superfamily. RNA M5U methyltransferase family. TrmA subfamily.

It carries out the reaction uridine(54) in tRNA + S-adenosyl-L-methionine = 5-methyluridine(54) in tRNA + S-adenosyl-L-homocysteine + H(+). The enzyme catalyses uridine(341) in tmRNA + S-adenosyl-L-methionine = 5-methyluridine(341) in tmRNA + S-adenosyl-L-homocysteine + H(+). Functionally, dual-specificity methyltransferase that catalyzes the formation of 5-methyluridine at position 54 (m5U54) in all tRNAs, and that of position 341 (m5U341) in tmRNA (transfer-mRNA). The protein is tRNA/tmRNA (uracil-C(5))-methyltransferase of Sodalis glossinidius (strain morsitans).